Here is a 216-residue protein sequence, read N- to C-terminus: Uridine kinase (216 aa).

16–23 is an ATP binding site; that stretch reads GASASGKS.

Belongs to the uridine kinase family.

It localises to the cytoplasm. The enzyme catalyses uridine + ATP = UMP + ADP + H(+). The catalysed reaction is cytidine + ATP = CMP + ADP + H(+). It functions in the pathway pyrimidine metabolism; CTP biosynthesis via salvage pathway; CTP from cytidine: step 1/3. The protein operates within pyrimidine metabolism; UMP biosynthesis via salvage pathway; UMP from uridine: step 1/1. The sequence is that of Uridine kinase from Pasteurella multocida (strain Pm70).